The sequence spans 363 residues: Ethanol acetyltransferase 1 (363 aa).

Residues 1 to 19 (MLLAYTVRPSNWSFTRRAY) constitute a mitochondrion transit peptide. The region spanning 65–164 (PIIFYHGLLG…FSAACIIDNS (100 aa)) is the AB hydrolase-1 domain. Catalysis depends on charge relay system residues serine 138, aspartate 162, and histidine 313.

The protein belongs to the AB hydrolase superfamily.

Its subcellular location is the mitochondrion. It carries out the reaction ethanol + acetyl-CoA = ethyl acetate + CoA. It catalyses the reaction acetyl-CoA + H2O = acetate + CoA + H(+). The enzyme catalyses ethyl acetate + H2O = ethanol + acetate + H(+). Alcohol acetyltransferase that catalyzes the synthesis of ethyl acetate from ethanol and acetyl-CoA. Can also function as a thioesterase by hydrolyzing acetyl-CoA in the absence of ethanol, as well as esterase hydrolyzing ethyl acetate. This is Ethanol acetyltransferase 1 (EAT1) from Kluyveromyces marxianus (strain DMKU3-1042 / BCC 29191 / NBRC 104275) (Yeast).